The primary structure comprises 291 residues: MLPPLPIPPDRPVLIAGPTASGKSALAAEIVGRDGGVVVNADALQVYDCWRILSARPSVAEEAALPHRLYGHVPRRGIYSAGHWLKEVEAVLREGLRPVIVGGTGLYFSSLTNGLADIPHTPPEMRHEADAFLARAGLSAMVADLDPATAGRIDLRNPARVQRAWEVLRATGRGLADWQAATGAPLLPLAETVALVLRPDRDWLAERIDRRFDLMIEAGALEEARVALADWDPALPSSRAIGAPELVAHLKGERTLDEAIAAAKLASRQYAKRQRTWFRNRMRDWREIRLP.

17-24 (GPTASGKS) contacts ATP. 19–24 (TASGKS) provides a ligand contact to substrate.

It belongs to the IPP transferase family. In terms of assembly, monomer. The cofactor is Mg(2+).

The catalysed reaction is adenosine(37) in tRNA + dimethylallyl diphosphate = N(6)-dimethylallyladenosine(37) in tRNA + diphosphate. Catalyzes the transfer of a dimethylallyl group onto the adenine at position 37 in tRNAs that read codons beginning with uridine, leading to the formation of N6-(dimethylallyl)adenosine (i(6)A). In Cereibacter sphaeroides (strain ATCC 17025 / ATH 2.4.3) (Rhodobacter sphaeroides), this protein is tRNA dimethylallyltransferase.